Reading from the N-terminus, the 461-residue chain is Argininosuccinate lyase (461 aa).

This sequence belongs to the lyase 1 family. Argininosuccinate lyase subfamily.

Its subcellular location is the cytoplasm. The catalysed reaction is 2-(N(omega)-L-arginino)succinate = fumarate + L-arginine. Its pathway is amino-acid biosynthesis; L-arginine biosynthesis; L-arginine from L-ornithine and carbamoyl phosphate: step 3/3. This is Argininosuccinate lyase from Chlorobium chlorochromatii (strain CaD3).